Here is a 165-residue protein sequence, read N- to C-terminus: Transcription antitermination protein NusB (165 aa).

It belongs to the NusB family.

Its function is as follows. Involved in transcription antitermination. Required for transcription of ribosomal RNA (rRNA) genes. Binds specifically to the boxA antiterminator sequence of the ribosomal RNA (rrn) operons. In Nitratidesulfovibrio vulgaris (strain DSM 19637 / Miyazaki F) (Desulfovibrio vulgaris), this protein is Transcription antitermination protein NusB.